The sequence spans 550 residues: Chaperonin GroEL (550 aa).

ATP contacts are provided by residues 29-32 (TAGP), Lys-50, 86-90 (DGTTT), Gly-418, and Asp-499.

This sequence belongs to the chaperonin (HSP60) family. As to quaternary structure, forms a cylinder of 14 subunits composed of two heptameric rings stacked back-to-back. Interacts with the co-chaperonin GroES.

The protein localises to the cytoplasm. It carries out the reaction ATP + H2O + a folded polypeptide = ADP + phosphate + an unfolded polypeptide.. Together with its co-chaperonin GroES, plays an essential role in assisting protein folding. The GroEL-GroES system forms a nano-cage that allows encapsulation of the non-native substrate proteins and provides a physical environment optimized to promote and accelerate protein folding. The polypeptide is Chaperonin GroEL (Wolbachia sp. subsp. Brugia malayi (strain TRS)).